Reading from the N-terminus, the 552-residue chain is Serine protease 53 (552 aa).

An N-terminal signal peptide occupies residues 1 to 23; sequence MRQSWRPELLIVGAVVVIEGLQA. Peptidase S1 domains follow at residues 24-273 and 294-525; these read AQRA…AHVH and VACG…NLDW. The tract at residues 27 to 46 is disordered; that stretch reads ACGQRGPGPPEPQEGNTLPG. A disulfide bridge connects residues C62 and C78. Active-site charge relay system residues include H77 and D128. Disulfide bonds link C158–C230, C187–C209, C220–C249, and C326–C342. Residues S224, H341, and D382 each act as charge relay system in the active site. Intrachain disulfides connect C443–C463 and C473–C501. Residue S477 is the Charge relay system of the active site.

Belongs to the peptidase S1 family.

It is found in the secreted. Its function is as follows. In vitro can degrade the fibrinogen alpha chain of as well as pro-urokinase-type plasminogen activator. The protein is Serine protease 53 (Prss53) of Mus musculus (Mouse).